The primary structure comprises 271 residues: ATP synthase subunit a (271 aa).

Helical transmembrane passes span 38 to 58, 100 to 120, 146 to 166, 220 to 240, and 242 to 262; these read FWTLNIDSMFFSVVLGLLFLV, LIAPLALTIFVWVFLMNLMDL, DVNITLSMALGVFILILFYSI, LIFILIAGLLPWWSQWILNVP, and AIFHILIITLQAFIFMVLTIV.

It belongs to the ATPase A chain family. In terms of assembly, F-type ATPases have 2 components, CF(1) - the catalytic core - and CF(0) - the membrane proton channel. CF(1) has five subunits: alpha(3), beta(3), gamma(1), delta(1), epsilon(1). CF(0) has three main subunits: a(1), b(2) and c(9-12). The alpha and beta chains form an alternating ring which encloses part of the gamma chain. CF(1) is attached to CF(0) by a central stalk formed by the gamma and epsilon chains, while a peripheral stalk is formed by the delta and b chains.

It is found in the cell inner membrane. Key component of the proton channel; it plays a direct role in the translocation of protons across the membrane. The chain is ATP synthase subunit a from Salmonella choleraesuis (strain SC-B67).